A 962-amino-acid chain; its full sequence is Putative RNA Helicase B962L (962 aa).

The Helicase ATP-binding domain occupies 43–229; it reads IPTSLADRVL…FGIGKENIIL (187 aa). Residue 56 to 63 coordinates ATP; it reads SRTGSGKS. Residues 167–170 carry the DEAH box motif; it reads DEAH. One can recognise a Helicase C-terminal domain in the interval 253-459; that stretch reads ACETALTIHK…TIKKNKEGVF (207 aa). The helical transmembrane segment at 521-541 threads the bilayer; that stretch reads GYFWQAAISDIATILAVVSVA.

Belongs to the DEAD box helicase family. DEAH subfamily.

It localises to the host membrane. The protein resides in the virion. The enzyme catalyses ATP + H2O = ADP + phosphate + H(+). The protein is Putative RNA Helicase B962L of African swine fever virus (isolate Tick/South Africa/Pretoriuskop Pr4/1996) (ASFV).